The following is a 172-amino-acid chain: Lipoprotein signal peptidase (172 aa).

Transmembrane regions (helical) follow at residues 10-30 (LIWL…KAWV), 68-88 (WQLW…AFWL), and 98-118 (SALP…DRLM). Active-site residues include D124 and D142. A helical membrane pass occupies residues 138-158 (FNIADSAIVGGAIGIAVFGLF).

The protein belongs to the peptidase A8 family.

It localises to the cell inner membrane. The enzyme catalyses Release of signal peptides from bacterial membrane prolipoproteins. Hydrolyzes -Xaa-Yaa-Zaa-|-(S,diacylglyceryl)Cys-, in which Xaa is hydrophobic (preferably Leu), and Yaa (Ala or Ser) and Zaa (Gly or Ala) have small, neutral side chains.. The protein operates within protein modification; lipoprotein biosynthesis (signal peptide cleavage). Its function is as follows. This protein specifically catalyzes the removal of signal peptides from prolipoproteins. In Xanthomonas euvesicatoria pv. vesicatoria (strain 85-10) (Xanthomonas campestris pv. vesicatoria), this protein is Lipoprotein signal peptidase.